The chain runs to 301 residues: Hydroxymycolate synthase MmaA4 (301 aa).

S-adenosyl-L-methionine contacts are provided by residues 42–43 (YS), 81–83 (GCG), 103–108 (TLSKNQ), 132–133 (WE), and I145. C278 is an active-site residue.

Belongs to the CFA/CMAS family. Monomer.

The protein operates within lipid metabolism; mycolic acid biosynthesis. Its function is as follows. Involved in the biosynthesis of hydroxymycolate, a common precursor of oxygenated mycolic acids (methoxymycolate and ketomycolate). Probably transfers a methyl group from the S-adenosylmethionine (SAM) cofactor and, subsequently or simultaneously, a water molecule onto the double bound of ethylene substrates, leading to the formation of the hydroxylated product at the distal position. The chain is Hydroxymycolate synthase MmaA4 (cmaA) from Mycobacterium bovis (strain ATCC BAA-935 / AF2122/97).